The primary structure comprises 159 residues: Protein Smg homolog (159 aa).

This sequence belongs to the Smg family.

This chain is Protein Smg homolog, found in Shewanella amazonensis (strain ATCC BAA-1098 / SB2B).